The following is a 253-amino-acid chain: Probable transcriptional regulatory protein Tlet_1011 (253 aa).

The protein belongs to the TACO1 family.

It localises to the cytoplasm. This is Probable transcriptional regulatory protein Tlet_1011 from Pseudothermotoga lettingae (strain ATCC BAA-301 / DSM 14385 / NBRC 107922 / TMO) (Thermotoga lettingae).